We begin with the raw amino-acid sequence, 667 residues long: MGDNVFLEPDPWASSSNWGSPVKPLNYKTAIGNSSIPLQYRNYWDVFQANNVLLFPEEESYSDIFHVPQDVMKEFFTLIESSSNQPLRQIQFFVLLALVACYQLGVPSTLEQIFKQRNVLPILQRFNPELFNRSSDNETPLFPNNSPPASTTALNLSSNIVPSINESKILEQEDDDVSNKSLPHAQQSIIRSFPDIQKQPKGFFSYPSSTVSSIAPSTLEAGNLHSQQPPKFSVDSSVDDNAITPRKPFSKIPNRLSPSTQPLLSNSRHSSFRLASSSTSFPASLEMNVDIDLEPSGYFFYRHNNYIISDSSNTREVLRRYSDFFWLHSYLMKKYPFRRVPLIPLKKFHFAKRNASTQNSFLEHRRQELSDFVNDLSHHPIFSNDEVVRVFFTEPNVFKNWRRENQKRIDQEIEQFLVVPQSQVPDASETVKERLLKLNMSTTTAINNQLNIFRIFEKMIFTLQHFHEDFLRLQNSFNCLLDSGLYHQVFTSTFAQNESKIMSMASGHFYNIDSLLHQQNDAVKHTFLLGLSKEIKILISLRLLIERISEVFSTDLTKVRHTISNDENLLRETANSDESGRNRTFLNRSSKKRAENSLKSKKELYLKNLNQRYQIAHELEQELSYLQDYVFSLGNPYVEYCKQHVKLEEESLKIWHTLESDFSRLET.

The segment at 221–268 is disordered; the sequence is AGNLHSQQPPKFSVDSSVDDNAITPRKPFSKIPNRLSPSTQPLLSNSR. Residues 224 to 236 show a composition bias toward polar residues; that stretch reads LHSQQPPKFSVDS. The 120-residue stretch at 279-398 folds into the PX domain; it reads TSFPASLEMN…RVFFTEPNVF (120 aa). Residues arginine 320, serine 322, and lysine 346 each coordinate a 1,2-diacyl-sn-glycero-3-phospho-(1D-myo-inositol-3-phosphate). The segment at 574 to 594 is disordered; sequence ANSDESGRNRTFLNRSSKKRA.

The protein belongs to the sorting nexin family. In terms of assembly, homodimer. Forms an autoinhibited tetramer consisting of 2 homodimers that self-interact, wherein the membrane-interacting BAR surfaces are sequestered and the PX lipid-binding sites are occluded. Interacts with Vps1.

Its subcellular location is the cytoplasm. The protein resides in the endosome membrane. Functionally, required for vacuolar protein sorting. Component of the retromer-mediated endosome-to-Golgi retrograde pathway. Required for efficient cargo export from the endosome, promoting Vps1-mediated fission of retromer-coated tubules that bud from the endosome. This is Sorting nexin mvp1 (mvp1) from Schizosaccharomyces pombe (strain 972 / ATCC 24843) (Fission yeast).